Here is a 629-residue protein sequence, read N- to C-terminus: Probable potassium transport system protein Kup 3 (629 aa).

12 helical membrane-spanning segments follow: residues 20-40, 54-74, 106-126, 143-163, 171-191, 212-232, 253-273, 291-311, 343-363, 372-392, 400-420, and 425-445; these read LSLS…LYTF, VTTI…IASV, PFII…GTIT, PSLK…LFAI, IGKA…ILGA, FLFS…LCAT, WFGL…ALVL, FLLP…QAII, IYIG…IIGF, AYGI…FIAL, IITS…FFAA, and FING…MMYI.

This sequence belongs to the HAK/KUP transporter (TC 2.A.72) family.

The protein localises to the cell inner membrane. It carries out the reaction K(+)(in) + H(+)(in) = K(+)(out) + H(+)(out). In terms of biological role, transport of potassium into the cell. Likely operates as a K(+):H(+) symporter. This chain is Probable potassium transport system protein Kup 3, found in Legionella pneumophila (strain Paris).